We begin with the raw amino-acid sequence, 240 residues long: Eukaryotic translation initiation factor 3 subunit J (240 aa).

The segment at M1 to A66 is disordered. The segment covering G27 to K45 has biased composition (acidic residues).

The protein belongs to the eIF-3 subunit J family. In terms of assembly, component of the eukaryotic translation initiation factor 3 (eIF-3) complex. The eIF-3 complex interacts with pix.

The protein localises to the cytoplasm. In terms of biological role, component of the eukaryotic translation initiation factor 3 (eIF-3) complex, which is involved in protein synthesis of a specialized repertoire of mRNAs and, together with other initiation factors, stimulates binding of mRNA and methionyl-tRNAi to the 40S ribosome. The eIF-3 complex specifically targets and initiates translation of a subset of mRNAs involved in cell proliferation. The polypeptide is Eukaryotic translation initiation factor 3 subunit J (Drosophila persimilis (Fruit fly)).